The sequence spans 874 residues: MYQTTAALRSAFLEFFRSNGHQVVDSSSLVPGNDPTLLFTNAGMNQFKDVFLGMDKRSYTRATTAQRCVRAGGKHNDLDNVGYTARHHTFFEMLGNFSFGDYFKEDAIRFGWTFLTEVLMLPKERLCVTIYQTDDEAFEIWNKKIGVAAENIIRIGDNKGAPYASDNFWQMGDTGPCGPCTEIFYDHGDHIWGGRPGSPEEDGDRFIEIWNIVFMQYNRQASGEMLPLPKPSVDTGMGIERIAAIMQGVHSNYEIDIFRALIAKAAEIIGVADLSNKSLRVIADHIRSCAFLVADGVMPSNEGRGYVLRRIIRRAVRHGNKLGATEAFFYKLVPTLIDVMGDAAKGLAETQVIVEKALKAEEEQFARTLERGLGILDSALNELQGDTLDGETVFKLYDTYGFPVDLTADVCRERNIIVDEAGFEAAMAEQRSRAQAAGNFGADYNAALKIDAETAFCGYSELTGNAKVTALYLNGESVPAINTGDDAVVVLDVTPFYAESGGQVGDKGVLMAQGIEFTVNDTQKFGQASGHKGTLTAGSLSVGQVLEAKVDKKLRHRTQLNHSVTHLLHAALRQVLGTHVTQKGSLVDPERLRFDFSHFEAVKPFELKQVEELVNTQIRRNHELKVAEMAIDEAKEKGAMALFGEKYDSQVRVVTMGDFSIELCGGTHVGRTGDIGLFKITSEGGIAAGVRRIEAVTGAAAMAYVAQQQAELEEAASLLKADAHSVVTKLKVQLDKMKQLEKEMQQLKDKLAAAASADLAGDAVVVNGVNVLIKKLEGVEAGALRGLQDELKQKLKSAIIVLGVAQEGKVNLIAGVSNDLIAKIKAGELVAMVATQVGGKGGGRPDMAQAGGSQPENLDAALSQVLPWITERLA.

Zn(2+) contacts are provided by histidine 562, histidine 566, cysteine 664, and histidine 668.

Belongs to the class-II aminoacyl-tRNA synthetase family. Zn(2+) is required as a cofactor.

The protein localises to the cytoplasm. The enzyme catalyses tRNA(Ala) + L-alanine + ATP = L-alanyl-tRNA(Ala) + AMP + diphosphate. Its function is as follows. Catalyzes the attachment of alanine to tRNA(Ala) in a two-step reaction: alanine is first activated by ATP to form Ala-AMP and then transferred to the acceptor end of tRNA(Ala). Also edits incorrectly charged Ser-tRNA(Ala) and Gly-tRNA(Ala) via its editing domain. This chain is Alanine--tRNA ligase, found in Shewanella oneidensis (strain ATCC 700550 / JCM 31522 / CIP 106686 / LMG 19005 / NCIMB 14063 / MR-1).